The chain runs to 230 residues: Ribosomal RNA small subunit methyltransferase G (230 aa).

S-adenosyl-L-methionine-binding positions include Gly74, Phe79, 124 to 125, and Arg141; that span reads AE.

The protein belongs to the methyltransferase superfamily. RNA methyltransferase RsmG family.

The protein resides in the cytoplasm. In terms of biological role, specifically methylates the N7 position of a guanine in 16S rRNA. The polypeptide is Ribosomal RNA small subunit methyltransferase G (Acholeplasma laidlawii (strain PG-8A)).